The following is a 229-amino-acid chain: Ribosomal RNA small subunit methyltransferase G (229 aa).

S-adenosyl-L-methionine is bound by residues Gly87, Leu92, 138–139 (VE), and Arg154.

The protein belongs to the methyltransferase superfamily. RNA methyltransferase RsmG family.

It localises to the cytoplasm. It catalyses the reaction guanosine(527) in 16S rRNA + S-adenosyl-L-methionine = N(7)-methylguanosine(527) in 16S rRNA + S-adenosyl-L-homocysteine. Specifically methylates the N7 position of guanine in position 527 of 16S rRNA. The sequence is that of Ribosomal RNA small subunit methyltransferase G from Oleidesulfovibrio alaskensis (strain ATCC BAA-1058 / DSM 17464 / G20) (Desulfovibrio alaskensis).